A 992-amino-acid polypeptide reads, in one-letter code: Presequence protease, mitochondrial (992 aa).

The N-terminal 30 residues, 1-30, are a transit peptide targeting the mitochondrion; sequence MNYAKLSIAFSKKTIKTHNCRLFQRWLHVG. Zn(2+) is bound at residue histidine 91. Glutamate 94 serves as the catalytic Proton acceptor. Histidine 95 provides a ligand contact to Zn(2+). Residue glutamate 167 is part of the active site. Residue glutamate 192 participates in Zn(2+) binding.

This sequence belongs to the peptidase M16 family. PreP subfamily. As to quaternary structure, monomer and homodimer; homodimerization is induced by binding of the substrate. The cofactor is Zn(2+).

It is found in the mitochondrion intermembrane space. The protein resides in the mitochondrion matrix. Its function is as follows. Degrades mitochondrial transit peptides after their cleavage in the intermembrane space or in the matrix, and presequence peptides; clearance of these peptides is required to keep the presequence processing machinery running. Preferentially cleaves the N-terminal side of paired basic amino acid residues. Also degrades other unstructured peptides. May function as an ATP-dependent peptidase as opposed to a metalloendopeptidase. The chain is Presequence protease, mitochondrial (cym1) from Schizosaccharomyces pombe (strain 972 / ATCC 24843) (Fission yeast).